The chain runs to 487 residues: Wax ester synthase/diacylglycerol acyltransferase 3 (487 aa).

The Cytoplasmic segment spans residues 1-193 (MYTMKKGKDM…KHASSNKKSW (193 aa)). His-151 (proton acceptor) is an active-site residue. A helical membrane pass occupies residues 194–214 (WLVGRFWFMIRIIFTTVVELF). The Lumenal segment spans residues 215-487 (KYLLTLCFMR…MEKGVHKMEV (273 aa)).

The protein in the N-terminal section; belongs to the long-chain O-acyltransferase family. Mostly expressed in flowers and siliques.

Its subcellular location is the cell membrane. It is found in the endoplasmic reticulum membrane. It carries out the reaction an acyl-CoA + a 1,2-diacyl-sn-glycerol = a triacyl-sn-glycerol + CoA. The enzyme catalyses a long chain fatty alcohol + a fatty acyl-CoA = a wax ester + CoA. It functions in the pathway glycerolipid metabolism; triacylglycerol biosynthesis. It participates in lipid metabolism. Bifunctional wax ester synthase/diacylglycerol acyltransferase. Involved in cuticular wax biosynthesis. In Arabidopsis thaliana (Mouse-ear cress), this protein is Wax ester synthase/diacylglycerol acyltransferase 3.